The sequence spans 485 residues: Glutamate--tRNA ligase (485 aa).

The short motif at 11–21 (PSPTGHLHIGN) is the 'HIGH' region element. Positions 252-256 (KLSKR) match the 'KMSKS' region motif. Residue lysine 255 participates in ATP binding.

This sequence belongs to the class-I aminoacyl-tRNA synthetase family. Glutamate--tRNA ligase type 1 subfamily. Monomer.

Its subcellular location is the cytoplasm. The catalysed reaction is tRNA(Glu) + L-glutamate + ATP = L-glutamyl-tRNA(Glu) + AMP + diphosphate. Its function is as follows. Catalyzes the attachment of glutamate to tRNA(Glu) in a two-step reaction: glutamate is first activated by ATP to form Glu-AMP and then transferred to the acceptor end of tRNA(Glu). The polypeptide is Glutamate--tRNA ligase (Bacillus cytotoxicus (strain DSM 22905 / CIP 110041 / 391-98 / NVH 391-98)).